The following is a 387-amino-acid chain: MLEFEVLKTDPATVDSEGAYLGSYARRGQLTLNHGVVQTPIFMPVGTYGTVKGVTPQSLHDMNAQIILGNTFHLWMRPGLDVVAQFGGLHKFESWHKPILTDSGGFQVWSLGEMRKISEEGVKFASPVNGDKLFLTPEISMQIQTLLNSDIVMQFDECTPYDTKGHITTEGEARSSMELSRRWAKRCEIEFDKLENPNALFGIVQGGMFENLRQESLDALVEMDFPGYAVGGVSVGEPKEEMLRIMAHTPHRLPAHKPRYLMGVGTPEDLVEGVASGVDMFDCVMPTRNARNGHMFTRFGDLKIRNARYKSEEAPVDSTCGCYTCRNFSRAYMHHLDRCGEMLGPMLSSIHNLHYYLNLMQEVRGALDAGRFGEFVRQFKADRQRGV.

Asp102 (proton acceptor) is an active-site residue. Substrate is bound by residues Asp102–Phe106, Asp156, Gln205, and Gly232. The interval Gly263–Asp269 is RNA binding. The active-site Nucleophile is Asp282. Residues Thr287 to Arg291 form an RNA binding; important for wobble base 34 recognition region. Zn(2+) is bound by residues Cys320, Cys322, Cys325, and His351.

The protein belongs to the queuine tRNA-ribosyltransferase family. In terms of assembly, homodimer. Within each dimer, one monomer is responsible for RNA recognition and catalysis, while the other monomer binds to the replacement base PreQ1. Zn(2+) serves as cofactor.

The enzyme catalyses 7-aminomethyl-7-carbaguanine + guanosine(34) in tRNA = 7-aminomethyl-7-carbaguanosine(34) in tRNA + guanine. It functions in the pathway tRNA modification; tRNA-queuosine biosynthesis. In terms of biological role, catalyzes the base-exchange of a guanine (G) residue with the queuine precursor 7-aminomethyl-7-deazaguanine (PreQ1) at position 34 (anticodon wobble position) in tRNAs with GU(N) anticodons (tRNA-Asp, -Asn, -His and -Tyr). Catalysis occurs through a double-displacement mechanism. The nucleophile active site attacks the C1' of nucleotide 34 to detach the guanine base from the RNA, forming a covalent enzyme-RNA intermediate. The proton acceptor active site deprotonates the incoming PreQ1, allowing a nucleophilic attack on the C1' of the ribose to form the product. After dissociation, two additional enzymatic reactions on the tRNA convert PreQ1 to queuine (Q), resulting in the hypermodified nucleoside queuosine (7-(((4,5-cis-dihydroxy-2-cyclopenten-1-yl)amino)methyl)-7-deazaguanosine). The protein is Queuine tRNA-ribosyltransferase of Polaromonas naphthalenivorans (strain CJ2).